The primary structure comprises 304 residues: Pyridoxal 5'-phosphate synthase subunit PdxS (304 aa).

Residue D34 participates in D-ribose 5-phosphate binding. The Schiff-base intermediate with D-ribose 5-phosphate role is filled by K91. Residue G163 participates in D-ribose 5-phosphate binding. Residue R175 participates in D-glyceraldehyde 3-phosphate binding. D-ribose 5-phosphate contacts are provided by residues G224 and 245-246; that span reads GS.

Belongs to the PdxS/SNZ family. In terms of assembly, in the presence of PdxT, forms a dodecamer of heterodimers.

It catalyses the reaction aldehydo-D-ribose 5-phosphate + D-glyceraldehyde 3-phosphate + L-glutamine = pyridoxal 5'-phosphate + L-glutamate + phosphate + 3 H2O + H(+). It functions in the pathway cofactor biosynthesis; pyridoxal 5'-phosphate biosynthesis. Catalyzes the formation of pyridoxal 5'-phosphate from ribose 5-phosphate (RBP), glyceraldehyde 3-phosphate (G3P) and ammonia. The ammonia is provided by the PdxT subunit. Can also use ribulose 5-phosphate and dihydroxyacetone phosphate as substrates, resulting from enzyme-catalyzed isomerization of RBP and G3P, respectively. The polypeptide is Pyridoxal 5'-phosphate synthase subunit PdxS (Cutibacterium acnes (strain DSM 16379 / KPA171202) (Propionibacterium acnes)).